A 424-amino-acid polypeptide reads, in one-letter code: Histidine--tRNA ligase (424 aa).

It belongs to the class-II aminoacyl-tRNA synthetase family. In terms of assembly, homodimer.

It localises to the cytoplasm. It carries out the reaction tRNA(His) + L-histidine + ATP = L-histidyl-tRNA(His) + AMP + diphosphate + H(+). The protein is Histidine--tRNA ligase of Escherichia coli (strain SE11).